A 396-amino-acid chain; its full sequence is Stearoyl-[acyl-carrier-protein] 9-desaturase 2, chloroplastic (396 aa).

A chloroplast-targeting transit peptide spans 1–32; sequence MALRPNDVTLRLTPPLAAAARRNRRAAAGGVR. Fe cation contacts are provided by E138, E176, H179, E229, E262, and H265.

It belongs to the fatty acid desaturase type 2 family. In terms of assembly, homodimer. Fe(2+) is required as a cofactor.

It localises to the plastid. The protein resides in the chloroplast. The catalysed reaction is octadecanoyl-[ACP] + 2 reduced [2Fe-2S]-[ferredoxin] + O2 + 2 H(+) = (9Z)-octadecenoyl-[ACP] + 2 oxidized [2Fe-2S]-[ferredoxin] + 2 H2O. Its pathway is lipid metabolism; fatty acid metabolism. Converts stearoyl-ACP to oleoyl-ACP by introduction of a cis double bond between carbons 9 and 10 of the acyl chain. Required for the repression of the salicylic acid (SA) signaling pathway. The chain is Stearoyl-[acyl-carrier-protein] 9-desaturase 2, chloroplastic (SSI2) from Oryza sativa subsp. indica (Rice).